Reading from the N-terminus, the 227-residue chain is UPF0758 protein SSA_1218 (227 aa).

Residues 104–226 (QIMGSQKLAR…YYSYREETDM (123 aa)) form the MPN domain. The Zn(2+) site is built by histidine 175, histidine 177, and aspartate 188. The JAMM motif motif lies at 175–188 (HNHPSGSVVPSRND).

The protein belongs to the UPF0758 family.

The protein is UPF0758 protein SSA_1218 of Streptococcus sanguinis (strain SK36).